We begin with the raw amino-acid sequence, 209 residues long: Uracil phosphoribosyltransferase (209 aa).

5-phospho-alpha-D-ribose 1-diphosphate contacts are provided by residues arginine 79, arginine 104, and 131–139; that span reads DPMLATGVS. Residues isoleucine 194 and 199–201 contribute to the uracil site; that span reads GDA. Position 200 (aspartate 200) interacts with 5-phospho-alpha-D-ribose 1-diphosphate.

The protein belongs to the UPRTase family. Requires Mg(2+) as cofactor.

The enzyme catalyses UMP + diphosphate = 5-phospho-alpha-D-ribose 1-diphosphate + uracil. It participates in pyrimidine metabolism; UMP biosynthesis via salvage pathway; UMP from uracil: step 1/1. Its activity is regulated as follows. Allosterically activated by GTP. In terms of biological role, catalyzes the conversion of uracil and 5-phospho-alpha-D-ribose 1-diphosphate (PRPP) to UMP and diphosphate. The chain is Uracil phosphoribosyltransferase from Thermotoga maritima (strain ATCC 43589 / DSM 3109 / JCM 10099 / NBRC 100826 / MSB8).